The sequence spans 919 residues: Kinesin-like protein KIN-UA (919 aa).

The segment at 1 to 68 is disordered; that stretch reads MSTTSGTGGV…SGGGGDAGVP (68 aa). Residues 15-51 are compositionally biased toward low complexity; sequence GTQRSSLRTQSSASTSSGGQKASVKSKSVLRKSSPAA. Residues 52-66 show a composition bias toward gly residues; it reads LGGGSSKSGGGGDAG. In terms of domain architecture, Kinesin motor spans 70–412; the sequence is RVRVAVRLRP…IMFGQRAMKV (343 aa). 155-162 provides a ligand contact to ATP; it reads GQTGTGKT. The segment at 286 to 305 is disordered; that stretch reads TRDGLSSESNGNSHMTKSLK. A compositionally biased stretch (polar residues) spans 291–301; that stretch reads SSESNGNSHMT. Residues 382–390 carry the D-BOX motif; sequence RTSLVITIG. 2 coiled-coil regions span residues 428–492 and 530–621; these read SRRL…SIKK and ALEE…LEQH. 4 ARM repeats span residues 650–689, 691–731, 733–773, and 775–814; these read KPPVARLFEQVGLQKILSLLEAEDADVRIHAVKVVANLAA, EANQ…NLAM, ETNQ…NLCG, and DKLQTKLRSEGGIAALLGMVRCGHPDVLAQVARGIANFAK.

It belongs to the TRAFAC class myosin-kinesin ATPase superfamily. Kinesin family. Ungrouped subfamily. As to quaternary structure, interacts (via C-terminus) with NEK5. As to expression, expressed in leaves, guard cells, trichomes, vascular tissues, stele of the root tip region and columella cells. Highest expression detected in guard cells.

It localises to the cytoplasm. Its subcellular location is the cytoskeleton. This is Kinesin-like protein KIN-UA from Arabidopsis thaliana (Mouse-ear cress).